Reading from the N-terminus, the 368-residue chain is 1-aminocyclopropane-1-carboxylate synthase (368 aa).

Lys230 bears the N6-(pyridoxal phosphate)lysine mark.

The protein belongs to the class-I pyridoxal-phosphate-dependent aminotransferase family. In terms of assembly, homodimer. It depends on pyridoxal 5'-phosphate as a cofactor.

It catalyses the reaction S-adenosyl-L-methionine = 1-aminocyclopropane-1-carboxylate + S-methyl-5'-thioadenosine + H(+). The protein operates within alkene biosynthesis; ethylene biosynthesis via S-adenosyl-L-methionine; ethylene from S-adenosyl-L-methionine: step 1/2. Its function is as follows. Catalyzes the formation of 1-aminocyclopropane-1-carboxylate, a direct precursor of ethylene in higher plants. The polypeptide is 1-aminocyclopropane-1-carboxylate synthase (ACS5) (Vigna radiata var. radiata (Mung bean)).